A 917-amino-acid polypeptide reads, in one-letter code: Protein translocase subunit SecA 1 (917 aa).

ATP-binding positions include Q87, G105 to T109, and D507. The tract at residues E866 to N917 is disordered. Residues C901, C903, C912, and H913 each coordinate Zn(2+). Over residues K907–N917 the composition is skewed to basic residues.

It belongs to the SecA family. Monomer and homodimer. Part of the essential Sec protein translocation apparatus which comprises SecA, SecYEG and auxiliary proteins SecDF-YajC and YidC. Zn(2+) is required as a cofactor.

The protein localises to the cell inner membrane. It localises to the cytoplasm. It carries out the reaction ATP + H2O + cellular proteinSide 1 = ADP + phosphate + cellular proteinSide 2.. Part of the Sec protein translocase complex. Interacts with the SecYEG preprotein conducting channel. Has a central role in coupling the hydrolysis of ATP to the transfer of proteins into and across the cell membrane, serving both as a receptor for the preprotein-SecB complex and as an ATP-driven molecular motor driving the stepwise translocation of polypeptide chains across the membrane. The sequence is that of Protein translocase subunit SecA 1 from Nitrosospira multiformis (strain ATCC 25196 / NCIMB 11849 / C 71).